Reading from the N-terminus, the 137-residue chain is Large ribosomal subunit protein uL16 (137 aa).

This sequence belongs to the universal ribosomal protein uL16 family. Part of the 50S ribosomal subunit.

Functionally, binds 23S rRNA and is also seen to make contacts with the A and possibly P site tRNAs. The sequence is that of Large ribosomal subunit protein uL16 from Beijerinckia indica subsp. indica (strain ATCC 9039 / DSM 1715 / NCIMB 8712).